The sequence spans 264 residues: ATP synthase subunit a (264 aa).

A run of 7 helical transmembrane segments spans residues 30-50 (WNIDSLLFSVGLGMLFLWLFY), 90-110 (IAPLALTIFVWIFMMNFMDMI), 111-131 (PVDWLPSLALLAGVPYLKVVP), 134-154 (DVNITFSLALGVFVLIIYYSI), 177-197 (IPVNLLLETVTLVAKPISLAL), 208-228 (LIFILIALMYGSNVALSALGV), and 235-255 (LIFHILVITLQAFIFMMLTIV).

It belongs to the ATPase A chain family. As to quaternary structure, F-type ATPases have 2 components, CF(1) - the catalytic core - and CF(0) - the membrane proton channel. CF(1) has five subunits: alpha(3), beta(3), gamma(1), delta(1), epsilon(1). CF(0) has three main subunits: a(1), b(2) and c(9-12). The alpha and beta chains form an alternating ring which encloses part of the gamma chain. CF(1) is attached to CF(0) by a central stalk formed by the gamma and epsilon chains, while a peripheral stalk is formed by the delta and b chains.

The protein localises to the cell inner membrane. Functionally, key component of the proton channel; it plays a direct role in the translocation of protons across the membrane. This is ATP synthase subunit a from Shewanella frigidimarina (strain NCIMB 400).